Reading from the N-terminus, the 115-residue chain is MDHLVKIIEKKYEKKEIPDFRPGDTVRVHVKVIEGDRERTQVFEGIVIAKRGSGINKTFTVRRIGSHGVGVERIFPVHSPVVEKIEVVRKGKVRRAKLYYLRNVRGKIRIKERRD.

It belongs to the bacterial ribosomal protein bL19 family.

Functionally, this protein is located at the 30S-50S ribosomal subunit interface and may play a role in the structure and function of the aminoacyl-tRNA binding site. In Thermotoga maritima (strain ATCC 43589 / DSM 3109 / JCM 10099 / NBRC 100826 / MSB8), this protein is Large ribosomal subunit protein bL19 (rplS).